Here is a 231-residue protein sequence, read N- to C-terminus: Flagellar L-ring protein (231 aa).

Positions 1 to 18 (MNRLMIVSLLGIATALGG) are cleaved as a signal peptide. Cys-19 carries N-palmitoyl cysteine lipidation. Cys-19 carries S-diacylglycerol cysteine lipidation. The disordered stretch occupies residues 118-141 (LSLSAEYGGSRDAKGDSQAGQSNS).

Belongs to the FlgH family. The basal body constitutes a major portion of the flagellar organelle and consists of four rings (L,P,S, and M) mounted on a central rod.

Its subcellular location is the cell outer membrane. The protein localises to the bacterial flagellum basal body. Its function is as follows. Assembles around the rod to form the L-ring and probably protects the motor/basal body from shearing forces during rotation. This Pseudomonas aeruginosa (strain LESB58) protein is Flagellar L-ring protein.